The chain runs to 437 residues: Tryptophan--tRNA ligase (437 aa).

The 'HIGH' region signature appears at 74-82 (PSGKVHLGH). The short motif at 321–325 (KMSSS) is the 'KMSKS' region element.

Belongs to the class-I aminoacyl-tRNA synthetase family.

The protein localises to the cytoplasm. The enzyme catalyses tRNA(Trp) + L-tryptophan + ATP = L-tryptophyl-tRNA(Trp) + AMP + diphosphate + H(+). The polypeptide is Tryptophan--tRNA ligase (Methanosarcina acetivorans (strain ATCC 35395 / DSM 2834 / JCM 12185 / C2A)).